The primary structure comprises 464 residues: ATP-dependent protease ATPase subunit HslU (464 aa).

Residues valine 18, glycine 60–glutamate 65, aspartate 277, glutamate 342, and arginine 414 each bind ATP.

The protein belongs to the ClpX chaperone family. HslU subfamily. As to quaternary structure, a double ring-shaped homohexamer of HslV is capped on each side by a ring-shaped HslU homohexamer. The assembly of the HslU/HslV complex is dependent on binding of ATP.

It is found in the cytoplasm. ATPase subunit of a proteasome-like degradation complex; this subunit has chaperone activity. The binding of ATP and its subsequent hydrolysis by HslU are essential for unfolding of protein substrates subsequently hydrolyzed by HslV. HslU recognizes the N-terminal part of its protein substrates and unfolds these before they are guided to HslV for hydrolysis. The polypeptide is ATP-dependent protease ATPase subunit HslU (Lactobacillus delbrueckii subsp. bulgaricus (strain ATCC 11842 / DSM 20081 / BCRC 10696 / JCM 1002 / NBRC 13953 / NCIMB 11778 / NCTC 12712 / WDCM 00102 / Lb 14)).